A 596-amino-acid chain; its full sequence is Aspartate--tRNA(Asp/Asn) ligase (596 aa).

Residue E175 participates in L-aspartate binding. The aspartate stretch occupies residues 199–202 (QQYK). The L-aspartate site is built by R221 and H454. 221–223 (RDE) serves as a coordination point for ATP. E488 contacts ATP. Position 495 (R495) interacts with L-aspartate. ATP is bound at residue 540-543 (GIDR).

The protein belongs to the class-II aminoacyl-tRNA synthetase family. Type 1 subfamily. As to quaternary structure, homodimer.

It is found in the cytoplasm. The catalysed reaction is tRNA(Asx) + L-aspartate + ATP = L-aspartyl-tRNA(Asx) + AMP + diphosphate. In terms of biological role, aspartyl-tRNA synthetase with relaxed tRNA specificity since it is able to aspartylate not only its cognate tRNA(Asp) but also tRNA(Asn). Reaction proceeds in two steps: L-aspartate is first activated by ATP to form Asp-AMP and then transferred to the acceptor end of tRNA(Asp/Asn). This is Aspartate--tRNA(Asp/Asn) ligase from Rhizobium johnstonii (strain DSM 114642 / LMG 32736 / 3841) (Rhizobium leguminosarum bv. viciae).